We begin with the raw amino-acid sequence, 156 residues long: Small ribosomal subunit protein uS7 (156 aa).

It belongs to the universal ribosomal protein uS7 family. In terms of assembly, part of the 30S ribosomal subunit. Contacts proteins S9 and S11.

In terms of biological role, one of the primary rRNA binding proteins, it binds directly to 16S rRNA where it nucleates assembly of the head domain of the 30S subunit. Is located at the subunit interface close to the decoding center, probably blocks exit of the E-site tRNA. This Streptococcus equi subsp. equi (strain 4047) protein is Small ribosomal subunit protein uS7.